A 115-amino-acid chain; its full sequence is Large ribosomal subunit protein bL19 (115 aa).

The protein belongs to the bacterial ribosomal protein bL19 family.

In terms of biological role, this protein is located at the 30S-50S ribosomal subunit interface and may play a role in the structure and function of the aminoacyl-tRNA binding site. The polypeptide is Large ribosomal subunit protein bL19 (Francisella tularensis subsp. mediasiatica (strain FSC147)).